Here is a 57-residue protein sequence, read N- to C-terminus: uncharacterized protein (57 aa).

A signal peptide spans 1–24 (MYDTWFVLTAVVLFVLVLIGNVHG).

Prismatic layer of shell (at protein level).

The protein localises to the secreted. This is an uncharacterized protein from Margaritifera margaritifera (Freshwater pearl mussel).